A 482-amino-acid chain; its full sequence is uncharacterized protein (482 aa).

The next 12 helical transmembrane spans lie at 40–57 (LDWYLMPMFSVLYFLSFL), 83–103 (AAVSVFYATYITAETPSVLLV), 109–129 (HYYLSAMIIGWSLVTIFTCFV), 140–160 (LLLGICEGGFFPCLSLYISMT), 170–190 (LAYLYVCSCFSGAFGGLIATG), 205–225 (WLYIIEGLISAISALWILFCL), 278–298 (VIQFCQDLVLYGISTFLPSIL), 311–331 (YMSVPVYALGGISVYVICLLS), 338–358 (GWFIIGMNFFGLAGFIILLAT), 366–386 (VATYLIALPLYPTVALNITWI), 399–418 (ALGCNQTIGNLAGVIAGQVY), and 428–448 (GFALGCTVVGTLTATAMRFYL).

Belongs to the major facilitator superfamily. Allantoate permease family.

It is found in the endoplasmic reticulum. The protein localises to the membrane. This is an uncharacterized protein from Schizosaccharomyces pombe (strain 972 / ATCC 24843) (Fission yeast).